A 552-amino-acid chain; its full sequence is Putative transport protein HAPS_0158 (552 aa).

Helical transmembrane passes span 4–24 (IALTVSLLSLVAVIGLWIGHI), 28–48 (GVSLGIGGVLFGGILVSHFMT), 65–85 (FGLILFVYTIGIQVGPGFFAS), 95–115 (AFAVMIVGISGILVILLHKIF), and 157–177 (MGYAIAYPFGIIGILLAMWLI). 2 consecutive RCK C-terminal domains span residues 193-275 (DSAT…ILGE) and 277-360 (VNVS…IIGN). The next 6 helical transmembrane spans lie at 370–390 (MLPIFIGVGLGVLLGSIPIYL), 393–413 (FPVALKLGLAGGPLVVALILA), 438–458 (IVLFLAVVGWKAGGNFLNTLL), 463–483 (LAWIGYGAIITFVPLIVTGLV), 492–512 (YLSLCGLLAGSMTDPPALAFA), and 532–552 (LVMFCRIILPQILAILLWVAG).

The protein belongs to the AAE transporter (TC 2.A.81) family. YidE subfamily.

The protein localises to the cell membrane. The polypeptide is Putative transport protein HAPS_0158 (Glaesserella parasuis serovar 5 (strain SH0165) (Haemophilus parasuis)).